We begin with the raw amino-acid sequence, 365 residues long: Protein RecA (365 aa).

73-80 (GPESSGKT) contributes to the ATP binding site.

This sequence belongs to the RecA family.

The protein localises to the cytoplasm. Functionally, can catalyze the hydrolysis of ATP in the presence of single-stranded DNA, the ATP-dependent uptake of single-stranded DNA by duplex DNA, and the ATP-dependent hybridization of homologous single-stranded DNAs. It interacts with LexA causing its activation and leading to its autocatalytic cleavage. This Prochlorococcus marinus (strain AS9601) protein is Protein RecA.